A 125-amino-acid polypeptide reads, in one-letter code: S-adenosylmethionine decarboxylase proenzyme (125 aa).

S71 (schiff-base intermediate with substrate; via pyruvic acid) is an active-site residue. S71 carries the pyruvic acid (Ser); by autocatalysis modification. The Proton acceptor; for processing activity role is filled by H76. C91 serves as the catalytic Proton donor; for catalytic activity.

Belongs to the prokaryotic AdoMetDC family. Type 1 subfamily. In terms of assembly, heterotetramer of two alpha and two beta chains arranged as a dimer of alpha/beta heterodimers. It depends on pyruvate as a cofactor. Post-translationally, is synthesized initially as an inactive proenzyme. Formation of the active enzyme involves a self-maturation process in which the active site pyruvoyl group is generated from an internal serine residue via an autocatalytic post-translational modification. Two non-identical subunits are generated from the proenzyme in this reaction, and the pyruvate is formed at the N-terminus of the alpha chain, which is derived from the carboxyl end of the proenzyme. The post-translation cleavage follows an unusual pathway, termed non-hydrolytic serinolysis, in which the side chain hydroxyl group of the serine supplies its oxygen atom to form the C-terminus of the beta chain, while the remainder of the serine residue undergoes an oxidative deamination to produce ammonia and the pyruvoyl group blocking the N-terminus of the alpha chain.

It carries out the reaction S-adenosyl-L-methionine + H(+) = S-adenosyl 3-(methylsulfanyl)propylamine + CO2. The protein operates within amine and polyamine biosynthesis; S-adenosylmethioninamine biosynthesis; S-adenosylmethioninamine from S-adenosyl-L-methionine: step 1/1. Functionally, catalyzes the decarboxylation of S-adenosylmethionine to S-adenosylmethioninamine (dcAdoMet), the propylamine donor required for the synthesis of the polyamines spermine and spermidine from the diamine putrescine. The sequence is that of S-adenosylmethionine decarboxylase proenzyme from Pyrobaculum islandicum (strain DSM 4184 / JCM 9189 / GEO3).